Reading from the N-terminus, the 312-residue chain is Olfactory receptor 2L13 (312 aa).

The Extracellular portion of the chain corresponds to 1-24 (MEKWNHTSNDFILLGLLPPNQTGI). N5 and N20 each carry an N-linked (GlcNAc...) asparagine glycan. A helical transmembrane segment spans residues 25 to 48 (FLLCLIILIFFLASVGNSAMIHLI). The Cytoplasmic portion of the chain corresponds to 49-56 (HVDPRLHT). A helical transmembrane segment spans residues 57–78 (PMYFLLSQLSLMDLMYISTTVP). The Extracellular portion of the chain corresponds to 79–99 (KMAYNFLSGQKGISFLGCGVQ). Cysteines 96 and 188 form a disulfide. Residues 100 to 119 (SFFFLTMACSEGLLLTSMAY) form a helical membrane-spanning segment. The Cytoplasmic segment spans residues 120-138 (DRYLAICHSLYYPIRMSKM). The helical transmembrane segment at 139–157 (MCVKMIGGSWTLGSINSLA) threads the bilayer. Topologically, residues 158–194 (HTVFALHIPYCRSRAIDHFFCDVPAMLLLACTDTWVY) are extracellular. Residues 195–218 (EYMVFVSTSLFLLFPFIGITSSCG) form a helical membrane-spanning segment. Topologically, residues 219 to 235 (RVLFAVYHMHSKEGRKK) are cytoplasmic. A helical transmembrane segment spans residues 236-258 (AFTTISTHLTVVIFYYAPFVYTY). Residues 259–271 (LRPRNLRSPAEDK) lie on the Extracellular side of the membrane. Residues 272–291 (ILAVFYTILTPMLNPIIYSL) form a helical membrane-spanning segment. Residues 292 to 312 (RNKEVLGAMRRVFGIFSFLKE) lie on the Cytoplasmic side of the membrane.

This sequence belongs to the G-protein coupled receptor 1 family.

The protein resides in the cell membrane. Odorant receptor. This is Olfactory receptor 2L13 (OR2L13) from Homo sapiens (Human).